Here is a 287-residue protein sequence, read N- to C-terminus: 3-alpha-hydroxysteroid sulfotransferase (287 aa).

44–49 is a binding site for 3'-phosphoadenylyl sulfate; sequence KSGTNW. Substrate is bound by residues W72 and W77. Residue H99 is the Proton acceptor of the active site. 3'-phosphoadenylyl sulfate contacts are provided by residues R121, S129, Y184, 218–223, and 247–249; these read SSFQFM and RKG.

It belongs to the sulfotransferase 1 family. As to quaternary structure, homodimer. In terms of tissue distribution, adrenal gland and liver.

It is found in the cytoplasm. It carries out the reaction an alcohol + 3'-phosphoadenylyl sulfate = an alkyl sulfate + adenosine 3',5'-bisphosphate + H(+). In terms of biological role, sulfotransferase that utilizes 3'-phospho-5'-adenylyl sulfate (PAPS) as sulfonate donor to catalyze the sulfonation of 3-alpha-hydroxyl groups of neutral steroids. The protein is 3-alpha-hydroxysteroid sulfotransferase (STD1) of Cavia porcellus (Guinea pig).